A 395-amino-acid chain; its full sequence is uncharacterized protein (395 aa).

8 consecutive transmembrane segments (helical) span residues 15–35 (ILAF…VTVF), 56–76 (WPWI…NIII), 86–106 (FHAP…FQIV), 131–151 (AVLL…LITW), 175–195 (WFSF…IFIA), 254–274 (LANI…FAIV), 298–318 (IAIT…TQFV), and 348–368 (VYIP…QVVI).

The protein resides in the cell membrane. This is an uncharacterized protein from Mycoplasma pneumoniae (strain ATCC 29342 / M129 / Subtype 1) (Mycoplasmoides pneumoniae).